The following is a 458-amino-acid chain: UDP-N-acetylmuramoylalanine--D-glutamate ligase (458 aa).

124 to 130 (GSDGKTT) contacts ATP.

Belongs to the MurCDEF family.

The protein localises to the cytoplasm. The catalysed reaction is UDP-N-acetyl-alpha-D-muramoyl-L-alanine + D-glutamate + ATP = UDP-N-acetyl-alpha-D-muramoyl-L-alanyl-D-glutamate + ADP + phosphate + H(+). Its pathway is cell wall biogenesis; peptidoglycan biosynthesis. Its function is as follows. Cell wall formation. Catalyzes the addition of glutamate to the nucleotide precursor UDP-N-acetylmuramoyl-L-alanine (UMA). The sequence is that of UDP-N-acetylmuramoylalanine--D-glutamate ligase from Clostridium botulinum (strain Langeland / NCTC 10281 / Type F).